A 339-amino-acid chain; its full sequence is Diacylglycerol acyltransferase/mycolyltransferase Ag85A (339 aa).

An N-terminal signal peptide occupies residues 1-43 (MKLVDRFRGAVTGMPRRLMVGAVGAALLSGLVGFVGGSATASA). Position 85-86 (85-86 (MR)) interacts with substrate. The interval 101-111 (FEWYNQSGISV) is fibronectin-binding. Cys-130 and Cys-135 are oxidised to a cystine. Residues Ser-169 and Asp-197 each contribute to the substrate site. Catalysis depends on Ser-169, which acts as the Nucleophile. Glu-272 is an active-site residue. Substrate is bound by residues 274-277 (FVRT), Lys-281, and 304-306 (HDW). His-304 is an active-site residue.

It belongs to the mycobacterial A85 antigen family. In terms of assembly, homodimer.

Its subcellular location is the secreted. The protein resides in the cell wall. It localises to the cytoplasm. It carries out the reaction an acyl-CoA + a 1,2-diacyl-sn-glycerol = a triacyl-sn-glycerol + CoA. The catalysed reaction is 2 alpha,alpha'-trehalose 6-mycolate = alpha,alpha'-trehalose 6,6'-bismycolate + alpha,alpha-trehalose. In terms of biological role, the antigen 85 proteins (FbpA, FbpB, FbpC) are responsible for the high affinity of mycobacteria for fibronectin, a large adhesive glycoprotein, which facilitates the attachment of M.tuberculosis to murine alveolar macrophages (AMs). They also help to maintain the integrity of the cell wall by catalyzing the transfer of mycolic acids to cell wall arabinogalactan, and through the synthesis of alpha,alpha-trehalose dimycolate (TDM, cord factor). They catalyze the transfer of a mycoloyl residue from one molecule of alpha,alpha-trehalose monomycolate (TMM) to another TMM, leading to the formation of TDM. FbpA mediates triacylglycerol (TAG) formation with long-chain acyl-CoA as the acyl donor and 1,2-dipalmitoyl-sn-glycerol (1,2-dipalmitin) as the acyl acceptor. It has a preference for C26:0-CoA over C18:1-CoA. The chain is Diacylglycerol acyltransferase/mycolyltransferase Ag85A (fbpA) from Mycobacterium gordonae.